Here is a 98-residue protein sequence, read N- to C-terminus: Pancreatic polypeptide prohormone (98 aa).

Positions Met-1–Gly-29 are cleaved as a signal peptide. Position 65 is a tyrosine amide (Tyr-65).

The protein belongs to the NPY family. No icosapeptide-like peptide is cleaved from the C-terminal.

The protein localises to the secreted. Hormone secreted by pancreatic cells that acts as a regulator of pancreatic and gastrointestinal functions probably by signaling through the G protein-coupled receptor NPY4R2. In Rattus norvegicus (Rat), this protein is Pancreatic polypeptide prohormone (Ppy).